We begin with the raw amino-acid sequence, 309 residues long: Malate dehydrogenase (309 aa).

NAD(+)-binding positions include 7–12 and Asp-32; that span reads GAGHVG. Positions 81 and 87 each coordinate substrate. NAD(+)-binding positions include Asn-94 and 117-119; that span reads VSN. Substrate is bound by residues Asn-119 and Arg-150. Catalysis depends on His-174, which acts as the Proton acceptor.

The protein belongs to the LDH/MDH superfamily. MDH type 3 family.

It catalyses the reaction (S)-malate + NAD(+) = oxaloacetate + NADH + H(+). In terms of biological role, catalyzes the reversible oxidation of malate to oxaloacetate. This is Malate dehydrogenase from Chlorobium phaeovibrioides (strain DSM 265 / 1930) (Prosthecochloris vibrioformis (strain DSM 265)).